Consider the following 309-residue polypeptide: MSNPSAPPPYEDHNPLYPGSPPPGGYGQPSVLPGGYPAYPAYPQPGYGHPAGYPQPVPPVHPMPMNYGHDYNEEERAGSDSFRPGEWDDRKVRHSFIQKVYCIISVQLLITVAIIAIFTFVEPVGKYVRNNVAVYYVSYAVFLVTYLTLACCQGPRRRFPWDIILLTIFTLALGFVTGTISSMYENKAVIIAMIITAVVSISVTIFCFQTKVDFTSCTGLFCVLGIVLMVTGIVTSIVLIFKYIYWLHMVYAALGAICFTLFLAYDTQLVLGNRKHTISPEDYITGALQIYTDIVYIFTFVLQLVGSRD.

Disordered stretches follow at residues 1–31 (MSNP…QPSV) and 64–84 (PMNY…SFRP). The segment covering 70–84 (DYNEEERAGSDSFRP) has biased composition (basic and acidic residues). S79 and S81 each carry phosphoserine. The next 7 membrane-spanning stretches (helical) occupy residues 101–121 (YCII…FTFV), 132–152 (VAVY…LACC), 163–183 (IILL…ISSM), 188–208 (AVII…IFCF), 221–241 (FCVL…VLIF), 244–264 (IYWL…LFLA), and 286–306 (GALQ…QLVG).

Belongs to the BI1 family. LFG subfamily. In terms of tissue distribution, expressed in most tissues except spleen, thymus and testis.

The protein localises to the membrane. The protein resides in the lysosome membrane. Its subcellular location is the endosome membrane. In terms of biological role, negatively regulates aortic matrix metalloproteinase-9 (MMP9) production and may play a protective role in vascular remodeling. This chain is Protein lifeguard 3 (Tmbim1), found in Mus musculus (Mouse).